A 515-amino-acid chain; its full sequence is Cytochrome P450 2D7 (515 aa).

Topologically, residues 1-2 (MG) are extracellular. A helical transmembrane segment spans residues 3-23 (LEALVPLAMIVAIFLLLVDLM). At 24-301 (HRHQRWAARY…DENLRIVVGN (278 aa)) the chain is on the cytoplasmic side. The helical transmembrane segment at 302–322 (LFLAGMVTTSTTLAWGLLLMI) threads the bilayer. At 323-515 (LHLDVQRGRR…SPYELCAVPR (193 aa)) the chain is on the extracellular side. Residue Asn416 is glycosylated (N-linked (GlcNAc...) asparagine). Residue Cys461 participates in heme binding.

This sequence belongs to the cytochrome P450 family. Heme serves as cofactor. Expressed in brain cortex (at protein level).

It is found in the membrane. Its subcellular location is the cytoplasm. It localises to the mitochondrion. It catalyses the reaction an organic molecule + reduced [NADPH--hemoprotein reductase] + O2 = an alcohol + oxidized [NADPH--hemoprotein reductase] + H2O + H(+). Its function is as follows. May be responsible for the metabolism of many drugs and environmental chemicals that it oxidizes. It may be involved in the metabolism of codeine to morphine. However, another study could not confirm it. The protein is Cytochrome P450 2D7 of Homo sapiens (Human).